We begin with the raw amino-acid sequence, 726 residues long: Catalase-peroxidase 1 (726 aa).

A disordered region spans residues 1–33 (MSTSDDIHNTTATGKCPFHQGGHDQSAGAGTTT). A cross-link (tryptophyl-tyrosyl-methioninium (Trp-Tyr) (with M-252)) is located at residues 105–226 (WHGAGTYRSI…LGATEMGLIY (122 aa)). H106 acts as the Proton acceptor in catalysis. A cross-link (tryptophyl-tyrosyl-methioninium (Tyr-Met) (with W-105)) is located at residues 226–252 (YVNPEGPDHSGEPLSAAAAIRATFGNM). H267 serves as a coordination point for heme b.

The protein belongs to the peroxidase family. Peroxidase/catalase subfamily. In terms of assembly, homodimer or homotetramer. It depends on heme b as a cofactor. Post-translationally, formation of the three residue Trp-Tyr-Met cross-link is important for the catalase, but not the peroxidase activity of the enzyme.

It carries out the reaction H2O2 + AH2 = A + 2 H2O. The catalysed reaction is 2 H2O2 = O2 + 2 H2O. In terms of biological role, bifunctional enzyme with both catalase and broad-spectrum peroxidase activity. In Escherichia coli O157:H7, this protein is Catalase-peroxidase 1.